Here is a 1081-residue protein sequence, read N- to C-terminus: Isoleucine--tRNA ligase (1081 aa).

Positions 53 to 63 match the 'HIGH' region motif; sequence PFATGLPHYGN. The short motif at 607 to 611 is the 'KMSKS' region element; that stretch reads KMSKS. Residue Lys610 participates in ATP binding.

This sequence belongs to the class-I aminoacyl-tRNA synthetase family.

The enzyme catalyses tRNA(Ile) + L-isoleucine + ATP = L-isoleucyl-tRNA(Ile) + AMP + diphosphate. The polypeptide is Isoleucine--tRNA ligase (ILSA) (Tetrahymena thermophila).